The sequence spans 262 residues: Spindlin-Z (262 aa).

Positions 1–50 (MKTPFGKSPGQRSRADAGHAGVSASMMKKRTSHKKHRNNVGPSKPISQPR) are disordered. The segment covering 27 to 38 (MKKRTSHKKHRN) has biased composition (basic residues).

It belongs to the SPIN/STSY family. Expressed in several tissues including testis.

It localises to the nucleus. Functionally, may play a role in mitosis. This is Spindlin-Z (SPINZ) from Gallus gallus (Chicken).